Here is a 189-residue protein sequence, read N- to C-terminus: Protein GrpE (189 aa).

The disordered stretch occupies residues 1 to 21 (MADEQNLDNQNPETPEQSQAD). Polar residues predominate over residues 7 to 20 (LDNQNPETPEQSQA).

This sequence belongs to the GrpE family. In terms of assembly, homodimer.

The protein resides in the cytoplasm. Participates actively in the response to hyperosmotic and heat shock by preventing the aggregation of stress-denatured proteins, in association with DnaK and GrpE. It is the nucleotide exchange factor for DnaK and may function as a thermosensor. Unfolded proteins bind initially to DnaJ; upon interaction with the DnaJ-bound protein, DnaK hydrolyzes its bound ATP, resulting in the formation of a stable complex. GrpE releases ADP from DnaK; ATP binding to DnaK triggers the release of the substrate protein, thus completing the reaction cycle. Several rounds of ATP-dependent interactions between DnaJ, DnaK and GrpE are required for fully efficient folding. The polypeptide is Protein GrpE (Stutzerimonas stutzeri (strain A1501) (Pseudomonas stutzeri)).